Consider the following 780-residue polypeptide: Cullin-5 (780 aa).

A Phosphoserine modification is found at S34. At T210 the chain carries Phosphothreonine. In terms of domain architecture, Cullin neddylation spans 711–772 (RILRTQEAII…HKYIRRDESD (62 aa)). K724 is covalently cross-linked (Glycyl lysine isopeptide (Lys-Gly) (interchain with G-Cter in NEDD8)).

It belongs to the cullin family. Component of multiple cullin-5-RING E3 ubiquitin-protein ligase complexes (ECS complexes, also named CRL5 complexes) formed of CUL5, Elongin BC (ELOB and ELOC), RNF7/RBX2 and a variable SOCS box domain-containing protein as substrate-specific recognition component. CUL5-containing ECS complexes specifically contain RNF7/RBX2, and not RBX1, as catalytic subunit. Component of the ECS(ASB2) complex with the substrate recognition component ASB2. Component of the ECS(ASB6) complex with the substrate recognition component ASB6. Component of the ECS(ASB7) complex with the substrate recognition component ASB7. Component of the ECS(ASB9) complex with the substrate recognition component ASB9. Component of the ECS(ASB11) complex with the substrate recognition component ASB11. Component of the ECS(ASB12) complex with the substrate recognition component ASB12. Component of the ECS(LRRC41) complex with the substrate recognition component LRRC41. Component of the ECS(SOCS1) complex with the substrate recognition component SOCS1. Component of the ECS(SOCS2) complex with the substrate recognition component SOCS2. Component of the ECS(WSB1) complex with the substrate recognition subunit WSB1. Component of the ECS(SOCS3) complex with the substrate recognition component SOCS3. Component of the ECS(SOCS7) complex with the substrate recognition component SOCS7. Component of the ECS(SPSB1) complex with the substrate recognition component SPSB1. Component of the ECS(SPSB3) complex with the substrate recognition component SPSB3. Component of the ECS(SPSB2) complex with the substrate recognition component SPSB2. Component of the ECS(SPSB4) complex with the substrate recognition component SPSB4. Component of the ECS(RAB40) complex with the substrate recognition subunit RAB40A, RAB40B or RAB40C. Component of the ECS(KLHDC1) complex with the substrate recognition component KLHDC1. Component of the ECS(PCMTD1) complex with the substrate recognition subunit PCMTD1. May also form complexes containing RBX1 and ELOA or VHL; additional evidence is however required to confirm this result in vivo. Interacts (when neddylated) with ARIH2; leading to activate the E3 ligase activity of ARIH2. Interacts with ERCC6; the interaction is induced by DNA damaging agents or inhibitors of RNA polymerase II elongation. Interacts with ELOA (via the BC-box). Interacts (unneddylated form) with DCUN1D1, DCUN1D2, DCUN1D3, DCUN1D4 and DCUN1D5; these interactions promote the cullin neddylation. In terms of processing, neddylated; which enhances the ubiquitination activity of ECS complexes and prevents binding of the inhibitor CAND1. Deneddylated via its interaction with the COP9 signalosome (CSN).

It is found in the nucleus. It participates in protein modification; protein ubiquitination. Core component of multiple cullin-5-RING E3 ubiquitin-protein ligase complexes (ECS complexes, also named CRL5 complexes), which mediate the ubiquitination and subsequent proteasomal degradation of target proteins. Acts a scaffold protein that contributes to catalysis through positioning of the substrate and the ubiquitin-conjugating enzyme. The functional specificity of the E3 ubiquitin-protein ligase complex depends on the variable SOCS box-containing substrate recognition component. Acts as a key regulator of neuron positioning during cortex development: component of various SOCS-containing ECS complexes, such as the ECS(SOCS7) complex, that regulate reelin signaling by mediating ubiquitination and degradation of DAB1. ECS(SOCS1) seems to direct ubiquitination of JAK2. The ECS(SOCS2) complex mediates the ubiquitination and subsequent proteasomal degradation of phosphorylated EPOR and GHR. The ECS(SPSB3) complex catalyzes ubiquitination of nuclear CGAS. ECS(KLHDC1) complex is part of the DesCEND (destruction via C-end degrons) pathway and mediates ubiquitination and degradation of truncated SELENOS selenoprotein produced by failed UGA/Sec decoding, which ends with a glycine. The ECS(ASB9) complex mediates ubiquitination and degradation of CKB. As part of some ECS complex, promotes 'Lys-11'-linked ubiquitination and degradation of BTRC. As part of a multisubunit ECS complex, polyubiquitinates monoubiquitinated POLR2A. As part of the ECS(RAB40C) complex, mediates ANKRD28 ubiquitination and degradation, thereby regulating protein phosphatase 6 (PP6) complex activity and focal adhesion assembly during cell migration. As part of the ECS(RAB40A) complex, mediates RHOU 'Lys-48'-linked ubiquitination and degradation, thus inhibiting focal adhesion disassembly during cell migration. As part of the ECS(RAB40B) complex, mediates LIMA1/EPLIN and RAP2 ubiquitination, thereby regulating actin cytoskeleton dynamics and stress fiber formation during cell migration. May form a cell surface vasopressin receptor. This Pongo abelii (Sumatran orangutan) protein is Cullin-5.